The sequence spans 679 residues: Glycine--tRNA ligase beta subunit (679 aa).

It belongs to the class-II aminoacyl-tRNA synthetase family. As to quaternary structure, tetramer of two alpha and two beta subunits.

It localises to the cytoplasm. The catalysed reaction is tRNA(Gly) + glycine + ATP = glycyl-tRNA(Gly) + AMP + diphosphate. In Streptococcus pyogenes serotype M3 (strain ATCC BAA-595 / MGAS315), this protein is Glycine--tRNA ligase beta subunit.